The following is a 625-amino-acid chain: Mesothelin (625 aa).

The first 35 residues, M1–L35, serve as a signal peptide directing secretion. Residue N93 is glycosylated (N-linked (GlcNAc...) asparagine). The residue at position 202 (S202) is a Phosphoserine. Cysteines 304 and 328 form a disulfide. N-linked (GlcNAc...) asparagine glycans are attached at residues N390, N488, and N517. The GPI-anchor amidated serine moiety is linked to residue S600. Positions S601–S625 are cleaved as a propeptide — removed in mature form.

The protein belongs to the mesothelin family. In terms of assembly, interacts with MUC16. Proteolytically cleaved by a furin-like convertase to generate megakaryocyte-potentiating factor (MPF), and the cleaved form of mesothelin. As to expression, highly expressed in lung and heart. Expressed at low levels in spleen, liver, kidney and testis. Present in lung (at protein level).

It is found in the cell membrane. The protein resides in the golgi apparatus. Its subcellular location is the secreted. Its function is as follows. Membrane-anchored forms may play a role in cellular adhesion. In terms of biological role, megakaryocyte-potentiating factor (MPF) may potentiate megakaryocyte colony formation. This is Mesothelin (Msln) from Mus musculus (Mouse).